The following is a 126-amino-acid chain: Aspartate 1-decarboxylase (126 aa).

Serine 25 serves as the catalytic Schiff-base intermediate with substrate; via pyruvic acid. Pyruvic acid (Ser) is present on serine 25. Substrate is bound at residue threonine 57. Tyrosine 58 functions as the Proton donor in the catalytic mechanism. 73–75 contacts substrate; it reads GAA.

It belongs to the PanD family. Heterooctamer of four alpha and four beta subunits. Requires pyruvate as cofactor. Is synthesized initially as an inactive proenzyme, which is activated by self-cleavage at a specific serine bond to produce a beta-subunit with a hydroxyl group at its C-terminus and an alpha-subunit with a pyruvoyl group at its N-terminus.

The protein resides in the cytoplasm. It catalyses the reaction L-aspartate + H(+) = beta-alanine + CO2. The protein operates within cofactor biosynthesis; (R)-pantothenate biosynthesis; beta-alanine from L-aspartate: step 1/1. In terms of biological role, catalyzes the pyruvoyl-dependent decarboxylation of aspartate to produce beta-alanine. This chain is Aspartate 1-decarboxylase, found in Escherichia coli O6:K15:H31 (strain 536 / UPEC).